Consider the following 442-residue polypeptide: tRNA-2-methylthio-N(6)-dimethylallyladenosine synthase (442 aa).

The region spanning 6–122 (RKFYIHTFGC…LPVLIAEAGK (117 aa)) is the MTTase N-terminal domain. [4Fe-4S] cluster-binding residues include Cys15, Cys51, Cys85, Cys157, Cys161, and Cys164. Positions 143–373 (RTQSLTAFVP…IDLQNGISAE (231 aa)) constitute a Radical SAM core domain. The TRAM domain occupies 376–439 (RLAIGSVVEV…SATLIGRAAE (64 aa)).

The protein belongs to the methylthiotransferase family. MiaB subfamily. Monomer. [4Fe-4S] cluster serves as cofactor.

Its subcellular location is the cytoplasm. It catalyses the reaction N(6)-dimethylallyladenosine(37) in tRNA + (sulfur carrier)-SH + AH2 + 2 S-adenosyl-L-methionine = 2-methylsulfanyl-N(6)-dimethylallyladenosine(37) in tRNA + (sulfur carrier)-H + 5'-deoxyadenosine + L-methionine + A + S-adenosyl-L-homocysteine + 2 H(+). Functionally, catalyzes the methylthiolation of N6-(dimethylallyl)adenosine (i(6)A), leading to the formation of 2-methylthio-N6-(dimethylallyl)adenosine (ms(2)i(6)A) at position 37 in tRNAs that read codons beginning with uridine. In Chlorobium limicola (strain DSM 245 / NBRC 103803 / 6330), this protein is tRNA-2-methylthio-N(6)-dimethylallyladenosine synthase.